We begin with the raw amino-acid sequence, 156 residues long: Transcriptional repressor NrdR (156 aa).

Residues 3–34 fold into a zinc finger; sequence CPYCGHLEDRVVDSRETQDGQATRRRRACLSC. Residues 49-139 form the ATP-cone domain; sequence PQVVKKDGRR…VYRAFRDVGE (91 aa).

The protein belongs to the NrdR family. Requires Zn(2+) as cofactor.

Its function is as follows. Negatively regulates transcription of bacterial ribonucleotide reductase nrd genes and operons by binding to NrdR-boxes. The chain is Transcriptional repressor NrdR from Anaeromyxobacter dehalogenans (strain 2CP-C).